The sequence spans 31 residues: Scolopendra 20566.01 Da toxin (31 aa).

It belongs to the CRISP family. Venom allergen 5-like subfamily. Contains 3 disulfide bonds. As to expression, expressed by the venom gland.

It localises to the secreted. The protein is Scolopendra 20566.01 Da toxin of Scolopendra angulata (Barbados giant red centipede).